Consider the following 470-residue polypeptide: Methylenetetrahydrofolate--tRNA-(uracil-5-)-methyltransferase TrmFO (470 aa).

10–15 (GAGLAG) contributes to the FAD binding site.

Belongs to the MnmG family. TrmFO subfamily. The cofactor is FAD.

It localises to the cytoplasm. The enzyme catalyses uridine(54) in tRNA + (6R)-5,10-methylene-5,6,7,8-tetrahydrofolate + NADH + H(+) = 5-methyluridine(54) in tRNA + (6S)-5,6,7,8-tetrahydrofolate + NAD(+). The catalysed reaction is uridine(54) in tRNA + (6R)-5,10-methylene-5,6,7,8-tetrahydrofolate + NADPH + H(+) = 5-methyluridine(54) in tRNA + (6S)-5,6,7,8-tetrahydrofolate + NADP(+). In terms of biological role, catalyzes the folate-dependent formation of 5-methyl-uridine at position 54 (M-5-U54) in all tRNAs. The sequence is that of Methylenetetrahydrofolate--tRNA-(uracil-5-)-methyltransferase TrmFO from Prochlorococcus marinus (strain MIT 9312).